Here is a 180-residue protein sequence, read N- to C-terminus: Transmembrane protein 190 (180 aa).

The signal sequence occupies residues 1-21 (MVGSGIPALGLLLLMQGSADG). Residues 22–81 (NGIQGFFYPWSCEGDVWDRESCGGQAAIENPNLCLRLRCCYRDGVCYHQRPDENMRRKHM) are Extracellular-facing. Positions 31–71 (WSCEGDVWDRESCGGQAAIENPNLCLRLRCCYRDGVCYHQR) constitute a P-type domain. Disulfide bonds link Cys33-Cys61, Cys43-Cys60, and Cys55-Cys67. A helical transmembrane segment spans residues 82-102 (WALGWTCGGLLFLITSICLFW). The Cytoplasmic segment spans residues 103-180 (WARRHDMLRL…EETEGGDEDD (78 aa)). The segment covering 131-140 (KDRTPSEKKT) has biased composition (basic and acidic residues). The disordered stretch occupies residues 131–180 (KDRTPSEKKTPSVGSIPPAAPTEGALDVSGGTEGEGTEGGEETEGGDEDD). Over residues 165–180 (EGTEGGEETEGGDEDD) the composition is skewed to acidic residues.

The protein resides in the membrane. This chain is Transmembrane protein 190 (TMEM190), found in Bos taurus (Bovine).